The following is a 397-amino-acid chain: Succinate--CoA ligase [ADP-forming] subunit beta (397 aa).

An ATP-grasp domain is found at 9–254 (KALLKGYGAP…ETEEDAKEIE (246 aa)). Residues Lys46, 53–55 (GRG), Glu109, Ala112, and Glu117 contribute to the ATP site. Positions 209 and 223 each coordinate Mg(2+). Substrate-binding positions include Asn274 and 331–333 (GIM).

Belongs to the succinate/malate CoA ligase beta subunit family. In terms of assembly, heterotetramer of two alpha and two beta subunits. It depends on Mg(2+) as a cofactor.

It catalyses the reaction succinate + ATP + CoA = succinyl-CoA + ADP + phosphate. The enzyme catalyses GTP + succinate + CoA = succinyl-CoA + GDP + phosphate. It participates in carbohydrate metabolism; tricarboxylic acid cycle; succinate from succinyl-CoA (ligase route): step 1/1. Its function is as follows. Succinyl-CoA synthetase functions in the citric acid cycle (TCA), coupling the hydrolysis of succinyl-CoA to the synthesis of either ATP or GTP and thus represents the only step of substrate-level phosphorylation in the TCA. The beta subunit provides nucleotide specificity of the enzyme and binds the substrate succinate, while the binding sites for coenzyme A and phosphate are found in the alpha subunit. The chain is Succinate--CoA ligase [ADP-forming] subunit beta from Rhizobium etli (strain ATCC 51251 / DSM 11541 / JCM 21823 / NBRC 15573 / CFN 42).